Reading from the N-terminus, the 218-residue chain is Ras-related protein Rab-11B (218 aa).

The residue at position 2 (G2) is an N-acetylglycine. Position 4 is a citrulline (R4). S20, G21, G23, K24, S25, N26, N37, L38, S40, S42, and T43 together coordinate GTP. A Mg(2+)-binding site is contributed by S25. The Switch 1 signature appears at 36 to 47 (FNLESKSTIGVE). Mg(2+) contacts are provided by T43 and D66. The Switch 2 motif lies at 67-86 (TAGQERYRAITSAYYRGAVG). The GTP site is built by G69, N124, K125, D127, A155, and L156. The segment at 184-218 (RAAHDESPGNNVVDISVPPTTDGQRPNKLQCCQSL) is disordered. 2 S-geranylgeranyl cysteine lipidation sites follow: C214 and C215. The residue at position 215 (C215) is a Cysteine methyl ester. A propeptide spans 216-218 (QSL) (removed in mature form).

It belongs to the small GTPase superfamily. Rab family. As to quaternary structure, interacts with KCNMA1. Interacts with RAB11FIP1, RAB11FIP2, RAB11FIP3 and RAB11FIP4. May interact with TBC1D14. Interacts with ATP6V1E1. Interacts with PI4KB. Interacts (GDP-bound form) with ZFYVE27. Interacts (GDP-bound form) with KIF5A in a ZFYVE27-dependent manner. Interacts with RELCH. Interacts (in GTP-bound form) with TBC1D8B (via domain Rab-GAP TBC). Forms a complex containing RAB11B, ASAP1, Rabin8/RAB3IP, RAP11FIP3 and ARF4. Interacts with WDR44. It depends on Mg(2+) as a cofactor. Post-translationally, citrullinated by PADI4. Abundantly expressed in brain, heart and testis. Also detected in kidney and pancreatic islets.

The protein resides in the recycling endosome membrane. It is found in the cytoplasmic vesicle. It localises to the secretory vesicle. The protein localises to the synaptic vesicle membrane. Its subcellular location is the phagosome membrane. It carries out the reaction GTP + H2O = GDP + phosphate + H(+). Its activity is regulated as follows. Regulated by guanine nucleotide exchange factors (GEFs) which promote the exchange of bound GDP for free GTP. Regulated by GTPase activating proteins (GAPs) which increase the GTP hydrolysis activity. Inhibited by GDP dissociation inhibitors (GDIs) which prevent Rab-GDP dissociation. Functionally, the small GTPases Rab are key regulators of intracellular membrane trafficking, from the formation of transport vesicles to their fusion with membranes. Rabs cycle between an inactive GDP-bound form and an active GTP-bound form that is able to recruit to membranes different set of downstream effectors directly responsible for vesicle formation, movement, tethering and fusion. The small Rab GTPase RAB11B plays a role in endocytic recycling, regulating apical recycling of several transmembrane proteins including cystic fibrosis transmembrane conductance regulator/CFTR, epithelial sodium channel/ENaC, potassium voltage-gated channel, and voltage-dependent L-type calcium channel. May also regulate constitutive and regulated secretion, like insulin granule exocytosis. Required for melanosome transport and release from melanocytes. Also regulates V-ATPase intracellular transport in response to extracellular acidosis. Promotes Rabin8/RAB3IP preciliary vesicular trafficking to mother centriole by forming a ciliary targeting complex containing Rab11, ASAP1, Rabin8/RAB3IP, RAB11FIP3 and ARF4, thereby regulating ciliogenesis initiation. On the contrary, upon LPAR1 receptor signaling pathway activation, interaction with phosphorylated WDR44 prevents Rab11-RAB3IP-RAB11FIP3 complex formation and cilia growth. In Mus musculus (Mouse), this protein is Ras-related protein Rab-11B.